A 169-amino-acid chain; its full sequence is Cilia- and flagella-associated protein 68 (169 aa).

Mn regions lie at residues 98–109 (TTYDTSYNNRRP) and 139–149 (KSTYMTSYSKP).

The protein belongs to the CFAP68 family. As to quaternary structure, microtubule inner protein component of sperm flagellar doublet microtubules.

It localises to the cytoplasm. It is found in the cytoskeleton. The protein resides in the cilium axoneme. The protein localises to the flagellum axoneme. Its subcellular location is the nucleus. It localises to the cell projection. It is found in the cilium. In terms of biological role, microtubule inner protein (MIP) part of the dynein-decorated doublet microtubules (DMTs) in cilia axoneme, which is required for motile cilia beating. This Bos taurus (Bovine) protein is Cilia- and flagella-associated protein 68 (CFAP68).